Reading from the N-terminus, the 344-residue chain is GTPase Obg (344 aa).

The Obg domain occupies 1-159; that stretch reads MKFLDLCKVY…RTLWLRLKLI (159 aa). The interval 126–146 is disordered; it reads GNLHFKSSTNQAPRRSNPGQD. The span at 130-144 shows a compositional bias: polar residues; that stretch reads FKSSTNQAPRRSNPG. Residues 160–327 enclose the OBG-type G domain; sequence ADVGLLGLPN…VLRKLRGEIS (168 aa). Residues 166–173, 191–195, 212–215, 279–282, and 308–310 contribute to the GTP site; these read GLPNAGKS, FTTLH, DIPG, NKID, and SGV. Residues serine 173 and threonine 193 each coordinate Mg(2+).

The protein belongs to the TRAFAC class OBG-HflX-like GTPase superfamily. OBG GTPase family. As to quaternary structure, monomer. Requires Mg(2+) as cofactor.

Its subcellular location is the cytoplasm. Functionally, an essential GTPase which binds GTP, GDP and possibly (p)ppGpp with moderate affinity, with high nucleotide exchange rates and a fairly low GTP hydrolysis rate. Plays a role in control of the cell cycle, stress response, ribosome biogenesis and in those bacteria that undergo differentiation, in morphogenesis control. In Roseobacter denitrificans (strain ATCC 33942 / OCh 114) (Erythrobacter sp. (strain OCh 114)), this protein is GTPase Obg.